The sequence spans 560 residues: Oxygen-dependent choline dehydrogenase 1 (560 aa).

8–37 contacts FAD; it reads DYIIIGAGSAGNVLATRLTEDPDVQVLLLE. H475 functions as the Proton acceptor in the catalytic mechanism.

Belongs to the GMC oxidoreductase family. It depends on FAD as a cofactor.

It carries out the reaction choline + A = betaine aldehyde + AH2. The enzyme catalyses betaine aldehyde + NAD(+) + H2O = glycine betaine + NADH + 2 H(+). It functions in the pathway amine and polyamine biosynthesis; betaine biosynthesis via choline pathway; betaine aldehyde from choline (cytochrome c reductase route): step 1/1. Involved in the biosynthesis of the osmoprotectant glycine betaine. Catalyzes the oxidation of choline to betaine aldehyde and betaine aldehyde to glycine betaine at the same rate. The sequence is that of Oxygen-dependent choline dehydrogenase 1 from Chromohalobacter salexigens (strain ATCC BAA-138 / DSM 3043 / CIP 106854 / NCIMB 13768 / 1H11).